The chain runs to 208 residues: Protein GrpE (208 aa).

Residues 1-12 show a composition bias toward basic and acidic residues; sequence MTNKDESVKKNT. The interval 1–51 is disordered; it reads MTNKDESVKKNTESTVEETNVKQNIDDSVEQAEESKGHLQDEAIEETSDEN. Residues 13–23 are compositionally biased toward polar residues; that stretch reads ESTVEETNVKQ. The segment covering 42–51 has biased composition (acidic residues); that stretch reads EAIEETSDEN.

Belongs to the GrpE family. Homodimer.

It is found in the cytoplasm. In terms of biological role, participates actively in the response to hyperosmotic and heat shock by preventing the aggregation of stress-denatured proteins, in association with DnaK and GrpE. It is the nucleotide exchange factor for DnaK and may function as a thermosensor. Unfolded proteins bind initially to DnaJ; upon interaction with the DnaJ-bound protein, DnaK hydrolyzes its bound ATP, resulting in the formation of a stable complex. GrpE releases ADP from DnaK; ATP binding to DnaK triggers the release of the substrate protein, thus completing the reaction cycle. Several rounds of ATP-dependent interactions between DnaJ, DnaK and GrpE are required for fully efficient folding. The polypeptide is Protein GrpE (Staphylococcus aureus (strain COL)).